The following is a 99-amino-acid chain: Large ribosomal subunit protein eL21 (99 aa).

The span at 1 to 18 shows a compositional bias: basic residues; it reads MVKHSRGNRTRSRKLLKK. The segment at 1–26 is disordered; sequence MVKHSRGNRTRSRKLLKKSPRERGAV.

It belongs to the eukaryotic ribosomal protein eL21 family.

The protein is Large ribosomal subunit protein eL21 of Metallosphaera sedula (strain ATCC 51363 / DSM 5348 / JCM 9185 / NBRC 15509 / TH2).